Here is a 632-residue protein sequence, read N- to C-terminus: DNA gyrase subunit B (632 aa).

Positions 419–533 (RELFIVEGES…SGYLYIAQPP (115 aa)) constitute a Toprim domain. Residues glutamate 425, aspartate 498, and aspartate 500 each contribute to the Mg(2+) site.

The protein belongs to the type II topoisomerase GyrB family. Heterotetramer, composed of two GyrA and two GyrB chains. In the heterotetramer, GyrA contains the active site tyrosine that forms a transient covalent intermediate with DNA, while GyrB binds cofactors and catalyzes ATP hydrolysis. Mg(2+) is required as a cofactor. Mn(2+) serves as cofactor. It depends on Ca(2+) as a cofactor.

It localises to the cytoplasm. It catalyses the reaction ATP-dependent breakage, passage and rejoining of double-stranded DNA.. A type II topoisomerase that negatively supercoils closed circular double-stranded (ds) DNA in an ATP-dependent manner to modulate DNA topology and maintain chromosomes in an underwound state. Negative supercoiling favors strand separation, and DNA replication, transcription, recombination and repair, all of which involve strand separation. Also able to catalyze the interconversion of other topological isomers of dsDNA rings, including catenanes and knotted rings. Type II topoisomerases break and join 2 DNA strands simultaneously in an ATP-dependent manner. This Archaeoglobus fulgidus (strain ATCC 49558 / DSM 4304 / JCM 9628 / NBRC 100126 / VC-16) protein is DNA gyrase subunit B.